The chain runs to 249 residues: 5'-nucleotidase SurE (249 aa).

4 residues coordinate a divalent metal cation: aspartate 8, aspartate 9, serine 39, and asparagine 91.

The protein belongs to the SurE nucleotidase family. It depends on a divalent metal cation as a cofactor.

The protein resides in the cytoplasm. The catalysed reaction is a ribonucleoside 5'-phosphate + H2O = a ribonucleoside + phosphate. In terms of biological role, nucleotidase that shows phosphatase activity on nucleoside 5'-monophosphates. In Ectopseudomonas mendocina (strain ymp) (Pseudomonas mendocina), this protein is 5'-nucleotidase SurE.